Reading from the N-terminus, the 166-residue chain is NAD(P)H-quinone oxidoreductase subunit I, chloroplastic (166 aa).

4Fe-4S ferredoxin-type domains follow at residues 55–84 (GRIH…VDWK) and 95–124 (LNYS…MTEE). 8 residues coordinate [4Fe-4S] cluster: cysteine 64, cysteine 67, cysteine 70, cysteine 74, cysteine 104, cysteine 107, cysteine 110, and cysteine 114.

It belongs to the complex I 23 kDa subunit family. NDH is composed of at least 16 different subunits, 5 of which are encoded in the nucleus. [4Fe-4S] cluster serves as cofactor.

Its subcellular location is the plastid. The protein localises to the chloroplast thylakoid membrane. The catalysed reaction is a plastoquinone + NADH + (n+1) H(+)(in) = a plastoquinol + NAD(+) + n H(+)(out). It carries out the reaction a plastoquinone + NADPH + (n+1) H(+)(in) = a plastoquinol + NADP(+) + n H(+)(out). NDH shuttles electrons from NAD(P)H:plastoquinone, via FMN and iron-sulfur (Fe-S) centers, to quinones in the photosynthetic chain and possibly in a chloroplast respiratory chain. The immediate electron acceptor for the enzyme in this species is believed to be plastoquinone. Couples the redox reaction to proton translocation, and thus conserves the redox energy in a proton gradient. The polypeptide is NAD(P)H-quinone oxidoreductase subunit I, chloroplastic (Encelia californica (Bush sunflower)).